Consider the following 507-residue polypeptide: MNNYNKIWEIILNELSKIYSDEVFKETFSNIKKINQIEEKIIISVETEFIKNKIYKMYFEKIKKITKLKFEEKIIIEFVSEKNKKNSNFDDEKKHFENLKEKLENENQTYFSKIENNENNDEFQNNKYFETIEKEQIETKTDNDKNVEIENRKISFNKYNYGNTNPKYSFDNFVVGKSNNFAFKIAKKIAEEKKVTTNPLYIFGKAGIGKTHLIQAIGNHILKKTHSSKKVLYVKADGFIEEFTNQLRKAKMEDFNEKYRDIDLLLVDDIQIMAGATRTQMEFFKLFDYLYLNQKQIVITSDKQASELKNIMSRLTSRFEAGLMVDIQSPDFNHRLNILKKKILEFEPQNPLKIKKDVLDLIASSFVNNVREMEGALLRLLNYAQTFGYDIDINIANEALELLIKSKKSVSYDEDVLEKIKSVVSNFFNISVRDLMSKKRQQKYTLPRHIAMYLIKELKDIPYNIVGSFFKRNHSAVFKAYQKIKKNSQSDYELKKSLELILKKINS.

The interval 1–72 (MNNYNKIWEI…KKITKLKFEE (72 aa)) is domain I, interacts with DnaA modulators. The tract at residues 72-162 (EKIIIEFVSE…KISFNKYNYG (91 aa)) is domain II. Positions 163-384 (NTNPKYSFDN…GALLRLLNYA (222 aa)) are domain III, AAA+ region. The ATP site is built by Gly-207, Gly-209, Lys-210, and Thr-211. Residues 385-507 (QTFGYDIDIN…LELILKKINS (123 aa)) are domain IV, binds dsDNA.

Belongs to the DnaA family. In terms of assembly, oligomerizes as a right-handed, spiral filament on DNA at oriC.

It is found in the cytoplasm. In terms of biological role, plays an essential role in the initiation and regulation of chromosomal replication. ATP-DnaA binds to the origin of replication (oriC) to initiate formation of the DNA replication initiation complex once per cell cycle. Binds the DnaA box (a 9 base pair repeat at the origin) and separates the double-stranded (ds)DNA. Forms a right-handed helical filament on oriC DNA; dsDNA binds to the exterior of the filament while single-stranded (ss)DNA is stabiized in the filament's interior. The ATP-DnaA-oriC complex binds and stabilizes one strand of the AT-rich DNA unwinding element (DUE), permitting loading of DNA polymerase. After initiation quickly degrades to an ADP-DnaA complex that is not apt for DNA replication. Binds acidic phospholipids. This chain is Chromosomal replication initiator protein DnaA, found in Onion yellows phytoplasma (strain OY-M).